A 124-amino-acid polypeptide reads, in one-letter code: Small ribosomal subunit protein uS12 (124 aa).

A disordered region spans residues 8–28 (IRSAREKTDKKTKSPALKSCP). Over residues 10 to 19 (SAREKTDKKT) the composition is skewed to basic and acidic residues. D89 is modified (3-methylthioaspartic acid).

This sequence belongs to the universal ribosomal protein uS12 family. As to quaternary structure, part of the 30S ribosomal subunit. Contacts proteins S8 and S17. May interact with IF1 in the 30S initiation complex.

Its function is as follows. With S4 and S5 plays an important role in translational accuracy. Functionally, interacts with and stabilizes bases of the 16S rRNA that are involved in tRNA selection in the A site and with the mRNA backbone. Located at the interface of the 30S and 50S subunits, it traverses the body of the 30S subunit contacting proteins on the other side and probably holding the rRNA structure together. The combined cluster of proteins S8, S12 and S17 appears to hold together the shoulder and platform of the 30S subunit. The protein is Small ribosomal subunit protein uS12 of Arthrospira platensis (Spirulina platensis).